Reading from the N-terminus, the 264-residue chain is Tryptophan synthase alpha chain (264 aa).

Catalysis depends on proton acceptor residues Glu45 and Asp56.

It belongs to the TrpA family. Tetramer of two alpha and two beta chains.

The catalysed reaction is (1S,2R)-1-C-(indol-3-yl)glycerol 3-phosphate + L-serine = D-glyceraldehyde 3-phosphate + L-tryptophan + H2O. The protein operates within amino-acid biosynthesis; L-tryptophan biosynthesis; L-tryptophan from chorismate: step 5/5. Its function is as follows. The alpha subunit is responsible for the aldol cleavage of indoleglycerol phosphate to indole and glyceraldehyde 3-phosphate. The polypeptide is Tryptophan synthase alpha chain (Leptospira interrogans serogroup Icterohaemorrhagiae serovar copenhageni (strain Fiocruz L1-130)).